We begin with the raw amino-acid sequence, 907 residues long: Glutamate receptor 1 (907 aa).

The first 18 residues, 1 to 18 (MPYIFAFFCTGFLGAVVG), serve as a signal peptide directing secretion. Topologically, residues 19-536 (ANFPNNIQIG…GVFSFLDPLA (518 aa)) are extracellular. Residues asparagine 63, asparagine 249, asparagine 257, asparagine 363, asparagine 401, and asparagine 406 are each glycosylated (N-linked (GlcNAc...) asparagine). Cysteines 75 and 323 form a disulfide. Proline 492, threonine 494, and arginine 499 together coordinate L-glutamate. The helical transmembrane segment at 537 to 557 (YEIWMCIVFAYIGVSVVLFLV) threads the bilayer. At 558-584 (SRFSPYEWHSEEFEEGRDQTTSDQSNE) the chain is on the cytoplasmic side. An intramembrane region (helical; Pore-forming) is located at residues 585-600 (FGIFNSLWFSLGAFMQ). Residues 601 to 603 (QGC) lie within the membrane without spanning it. Cysteine 603 is lipidated: S-palmitoyl cysteine. Residues 604–609 (DISPRS) are Cytoplasmic-facing. A helical transmembrane segment spans residues 610–630 (LSGRIVGGVWWFFTLIIISSY). The Extracellular portion of the chain corresponds to 631–805 (TANLAAFLTV…DKTSALSLSN (175 aa)). Serine 645 carries the phosphoserine modification. The L-glutamate site is built by serine 668 and threonine 669. A Phosphoserine modification is found at serine 710. L-glutamate is bound at residue glutamate 719. Cysteine 732 and cysteine 787 form a disulfide bridge. Residues 806–826 (VAGVFYILIGGLGLAMLVALI) traverse the membrane as a helical segment. The Cytoplasmic portion of the chain corresponds to 827-907 (EFCYKSRSES…SGMPLGATGL (81 aa)). Residue cysteine 829 is the site of S-palmitoyl cysteine attachment. Serine 849 and serine 863 each carry phosphoserine. A disordered region spans residues 857-881 (STLPRNSGAGASGGSGSGENGRVVS). Positions 866–875 (GASGGSGSGE) are enriched in gly residues. A PDZ-binding motif is present at residues 904–907 (ATGL).

The protein belongs to the glutamate-gated ion channel (TC 1.A.10.1) family. GRIA1 subfamily. As to quaternary structure, homotetramer or heterotetramer of pore-forming glutamate receptor subunits. Heteromeric assembly can be the result of both receptor subtype and flip or flop form and according the composition, one partner can be dominant with respect to the fast desensitizing current component, whereas the other can determine the steady-state component. Tetramers may be formed by the dimerization of dimers. Found in a complex with GRIA2, GRIA3, GRIA4, CNIH2, CNIH3, CACNG2, CACNG3, CACNG4, CACNG5, CACNG7 and CACNG8. Interacts with HIP1 and RASGRF2. Interacts with SYNDIG1 and GRIA2. Interacts with DLG1 (via C-terminus). Interacts with LRFN1. Interacts with PRKG2. Interacts with CNIH2 and CACNG2. Interacts with CACNG5; this interaction modulates the gating. Interacts (via C-terminus) with PDLIM4 (via LIM domain); this interaction as well as the interaction of PDLIM4 with alpha-actinin is required for their colocalization in early endosomes. Interacts with SNX27 (via PDZ domain); the interaction is required for recycling to the plasma membrane when endocytosed and prevent degradation in lysosomes. Interacts (via PDZ-binding motif) with SHANK3 (via PDZ domain). Interacts with CACNG3; associates GRIA1 with the adapter protein complex 4 (AP-4) to target GRIA1 to the somatodendritic compartment of neurons. Interacts with CACNG2; this interaction mediates traffick to the plasma membrane and modulation of desensitization. Interacts with CNIH2 and CNIH3; this interaction promotes expression at the plasma membrane and extensively modulates their gating properties by slowing deactivation and desensitization kinetics. Found in a complex with GRIA2, GRIA3, GRIA4, DLG4, CACNG8 and CNIH2. Post-translationally, phosphorylated at Ser-645. Phosphorylated at Ser-710 by PKC. Phosphorylated at Ser-849 by PKC, PKA and CAMK2. Phosphorylated at Ser-863 by PKC, PKA and PRKG2. Phosphorylation of Ser-863 is reduced by induction of long-term depression and increased by induction of long-term potentiation. Palmitoylated. Depalmitoylated by CPT1C and upon L-glutamate stimulation. ZDHHC3/GODZ specifically palmitoylates Cys-603, which leads to Golgi retention and decreased cell surface expression. In contrast, Cys-829 palmitoylation does not affect cell surface expression but regulates stimulation-dependent endocytosis. In terms of tissue distribution, expressed in the outer plexiform layer of the retina of the eye (at protein level). Expressed in the forebrain and hippocampus (at protein level).

Its subcellular location is the cell membrane. It localises to the endoplasmic reticulum membrane. The protein resides in the postsynaptic cell membrane. The protein localises to the postsynaptic density membrane. It is found in the cell projection. Its subcellular location is the dendrite. It localises to the dendritic spine. The protein resides in the early endosome membrane. The protein localises to the recycling endosome membrane. It is found in the presynapse. Its subcellular location is the synapse. It carries out the reaction Ca(2+)(in) = Ca(2+)(out). It catalyses the reaction Na(+)(in) = Na(+)(out). The catalysed reaction is Mg(2+)(in) = Mg(2+)(out). The enzyme catalyses Li(+)(in) = Li(+)(out). It carries out the reaction K(+)(in) = K(+)(out). It catalyses the reaction Sr(2+)(in) = Sr(2+)(out). Ionotropic glutamate receptor that functions as a ligand-gated cation channel, gated by L-glutamate and glutamatergic agonists such as alpha-amino-3-hydroxy-5-methyl-4-isoxazolepropionic acid (AMPA), quisqualic acid, and kainic acid. L-glutamate acts as an excitatory neurotransmitter at many synapses in the central nervous system. Binding of the excitatory neurotransmitter L-glutamate induces a conformation change, leading to the opening of the cation channel, and thereby converts the chemical signal to an electrical impulse upon entry of monovalent and divalent cations such as sodium and calcium. The receptor then desensitizes rapidly and enters in a transient inactive state, characterized by the presence of bound agonist. In the presence of CACNG2 or CACNG4 or CACNG7 or CACNG8, shows resensitization which is characterized by a delayed accumulation of current flux upon continued application of L-glutamate. Calcium (Ca(2+)) permeability depends on subunits composition and, heteromeric channels containing edited GRIA2 subunit are calcium-impermeable. Also permeable to other divalents cations such as strontium(2+) and magnesium(2+) and monovalent cations such as potassium(1+) and lithium(1+). The sequence is that of Glutamate receptor 1 from Mus musculus (Mouse).